The following is a 321-amino-acid chain: Sideroflexin-3 (321 aa).

Position 1 is an N-acetylmethionine (Met-1). 4 helical membrane passes run 146–164 (LGTA…ALGL), 174–194 (LVGR…NIPL), 225–245 (IFQV…IPPV), and 266–286 (LQVG…CALF).

The protein belongs to the sideroflexin family.

Its subcellular location is the mitochondrion membrane. The enzyme catalyses L-serine(in) = L-serine(out). Functionally, mitochondrial serine transporter that mediates transport of serine into mitochondria, an important step of the one-carbon metabolism pathway. Mitochondrial serine is converted to glycine and formate, which then exits to the cytosol where it is used to generate the charged folates that serve as one-carbon donors. The protein is Sideroflexin-3 (Sfxn3) of Rattus norvegicus (Rat).